Consider the following 743-residue polypeptide: Putative cation exchanger C3A12.06c (743 aa).

Transmembrane regions (helical) follow at residues 13–33, 109–129, 138–158, 182–202, 213–233, 239–258, 528–548, 551–571, 580–600, 609–629, 649–669, 690–710, and 718–738; these read LILLWCILGIAYILFWTHRIS, FPVLSIIVGWLIFLFITIGIS, LVTISWLLQLPDSVVGVTFLA, IGELLGSAFFIVAIVAGSVCL, FLRDVAFLTGTILLVIMFVLH, IWQSLVMILYYLLYVLFVFF, LRLLQCVFVPFAFVTFSITGG, LYIYAASSVFSILCITALYYY, FLPWVSFIGFVLGIIWISTIA, ALGVIFNLNESILGLTVFAAG, MAMGGVFGGPTLNILIGIGIS, LSITAYFLLACLLLLLIYVPL, and VLGLLLFILYIVGTSTNIVVE.

Belongs to the Ca(2+):cation antiporter (CaCA) (TC 2.A.19) family.

It is found in the endoplasmic reticulum membrane. Putative cation exchanger. The protein is Putative cation exchanger C3A12.06c of Schizosaccharomyces pombe (strain 972 / ATCC 24843) (Fission yeast).